Consider the following 179-residue polypeptide: Large ribosomal subunit protein uL5 (179 aa).

It belongs to the universal ribosomal protein uL5 family. As to quaternary structure, part of the 50S ribosomal subunit; part of the 5S rRNA/L5/L18/L25 subcomplex. Contacts the 5S rRNA and the P site tRNA. Forms a bridge to the 30S subunit in the 70S ribosome.

Its function is as follows. This is one of the proteins that bind and probably mediate the attachment of the 5S RNA into the large ribosomal subunit, where it forms part of the central protuberance. In the 70S ribosome it contacts protein S13 of the 30S subunit (bridge B1b), connecting the 2 subunits; this bridge is implicated in subunit movement. Contacts the P site tRNA; the 5S rRNA and some of its associated proteins might help stabilize positioning of ribosome-bound tRNAs. The sequence is that of Large ribosomal subunit protein uL5 from Hamiltonella defensa subsp. Acyrthosiphon pisum (strain 5AT).